We begin with the raw amino-acid sequence, 252 residues long: UPF0246 protein FP0718 (252 aa).

This sequence belongs to the UPF0246 family.

This chain is UPF0246 protein FP0718, found in Flavobacterium psychrophilum (strain ATCC 49511 / DSM 21280 / CIP 103535 / JIP02/86).